The primary structure comprises 264 residues: uncharacterized protein (264 aa).

A signal peptide spans 1–21 (MMWNYFVTCIVLYANIISIHT). The disordered stretch occupies residues 182-247 (QQPNAAQVPT…AANNGLDLTS (66 aa)). Positions 190–213 (PTTSQQQPTSNTGGQQPPTNASNP) are enriched in low complexity. N-linked (GlcNAc...) asparagine glycosylation occurs at Asn-209. Residues 214–226 (PTNPQPTPTPAQP) are compositionally biased toward pro residues. A compositionally biased stretch (polar residues) spans 230–247 (GTQVQQTPAANNGLDLTS).

Component of the acid-insoluble and acid-soluble organic matrix of calcified layers of the shell (at protein level).

It localises to the secreted. This is an uncharacterized protein from Lottia gigantea (Giant owl limpet).